The chain runs to 481 residues: Argininosuccinate lyase (481 aa).

Belongs to the lyase 1 family. Argininosuccinate lyase subfamily.

It is found in the cytoplasm. The catalysed reaction is 2-(N(omega)-L-arginino)succinate = fumarate + L-arginine. Its pathway is amino-acid biosynthesis; L-arginine biosynthesis; L-arginine from L-ornithine and carbamoyl phosphate: step 3/3. This Methanococcus maripaludis (strain C6 / ATCC BAA-1332) protein is Argininosuccinate lyase.